The sequence spans 38 residues: Photosystem I reaction center subunit IX (38 aa).

The helical transmembrane segment at 4–24 (FLTTAPVVAAIWFTLTAGILI) threads the bilayer.

Belongs to the PsaJ family.

The protein localises to the cellular thylakoid membrane. In terms of biological role, may help in the organization of the PsaE and PsaF subunits. This chain is Photosystem I reaction center subunit IX, found in Parasynechococcus marenigrum (strain WH8102).